The sequence spans 870 residues: Dynamin-2 (870 aa).

Residues 28 to 294 (HLDLPQIAVV…LTNHIRESLP (267 aa)) form the Dynamin-type G domain. A G1 motif region spans residues 38 to 45 (GGQSAGKS). The GDP site is built by Ser41, Gly43, Lys44, Ser45, Ser46, Arg59, and Gly60. The G2 motif stretch occupies residues 64 to 66 (VTR). Positions 136 to 139 (DLPG) are G3 motif. The G4 motif stretch occupies residues 205–208 (TKLD). Residues Lys206, Asp208, and Asp211 each contribute to the GDP site. The residue at position 231 (Tyr231) is a Phosphotyrosine. Residues 235–238 (VNRS) are G5 motif. 3 residues coordinate GDP: Asn236, Arg237, and Gln239. Position 299 is an N6-acetyllysine (Lys299). A PH domain is found at 519–625 (LVIRRGWLTI…WKASFLRAGV (107 aa)). Tyr597 carries the phosphotyrosine modification. N6-acetyllysine is present on Lys598. The GED domain occupies 653–744 (VETIRNLVDS…IIGDISTSTV (92 aa)). Positions 741–870 (TSTVSTPVPP…IRPAEPSLLD (130 aa)) are disordered. Thr755 is subject to Phosphothreonine. Residues 756–767 (WLQNTSGHSPTP) are compositionally biased toward polar residues. Ser764 is subject to Phosphoserine; by CDK1. Residues 826-846 (SAPPQIPSRPARIPPGIPPGV) show a composition bias toward pro residues. Residues 847–864 (PSRRAPAAPSRPTIIRPA) show a composition bias toward low complexity.

Belongs to the TRAFAC class dynamin-like GTPase superfamily. Dynamin/Fzo/YdjA family. As to quaternary structure, oligomerizes into a helical polymer that self-assembles around the vesicle membrane, when associated to the menbrane through lipid binding. Interacts with SHANK1 and SHANK2. Interacts with SNX9. Interacts (via C-terminal proline-rich domain (PRD)) with SNX18 (via SH3 domain); this interaction regulates ATG9A and ATG16L1 trafficking from recycling endosomes to sites of autophagosome formation. Interacts with SNX33 (via SH3 domain). Interacts with MYO1E (via SH3 domain). Interacts with PSTPIP1 (via SH3 domain). Interacts with CTNND2. Interacts (via C-terminal proline-rich domain (PRD)) with BIN1 (via SH3 domain); this interaction allows the recruitment of DNM2 to the membrane tubules and inhibits self-assembly-stimulated GTPase activity on the membrane. Interacts with GABARAP, GABARAPL1 and GABARAPL2. Interacts with MAP1LC3B (the lipidate and non-lipidated LC3 form); this interaction mediates recycling endosome scission leading to autophagosome release. Interacts with ITSN1. Interacts (via C-terminal proline-rich domain (PRD)) with SH3BP4 (via SH3 domain); this interaction controls the GTPase activity and is prevented by EGFR-induced tyrosine phosphorylation of either DNM2 or SH3BP4. Interacts with MYOF. May interact with PIK3C3. May be a component of a complex composed of RAB5A (in GDP-bound form), DYN2 and PIK3C3. Interacts with SDC4; this interaction is markedly enhanced at focal ahesion site upon induction of focal adhesions and stress-fiber formation. Interacts with ACTN1. Interacts with CTTN; this interaction stimulates the intrinsic GTPase activity of DNM2 and stabilizes the association of DNM2 and actin filaments; in addition this interaction is stimulated by ligand binding to the receptor, leading to the recruitment of the DNM2-CTTN complex to the sequestered receptor-ligand complex to its internalization. Interacts with NOSTRIN (via SH3 domain); this interaction allows the recruitment of NOS3 to dynamin-positive structures. Interacts with TUBG1; this interaction may participate in centrosome cohesion. Post-translationally, phosphorylation at Ser-848 by GSK3-alpha relieves the inhibition of BIN1 and promotes endocytosis. Phosphorylation at Ser-764 by CDK1 is greatly increased upon mitotic entry. It regulates cytokinesis downstream of calcineurin, and does not affect clathrin-mediated endocytosis. Dephosphorylated by calcineurin/PP2 during cytokinesis in a Ca(2+)- and calmodulin-dependent manner. Phosphorylated on tyrosine residues by EGFR. Phosphorylated on tyrosine residues after activation of SRC. In terms of tissue distribution, expressed in most tissues during embryonic development, including the peripheral nervous system although no expression is evident in skeletal muscle or heart.

Its subcellular location is the cytoplasm. It is found in the cytoskeleton. It localises to the cytoplasmic vesicle. The protein localises to the clathrin-coated vesicle. The protein resides in the cell projection. Its subcellular location is the uropodium. It is found in the endosome. It localises to the microtubule organizing center. The protein localises to the centrosome. The protein resides in the centriole. Its subcellular location is the recycling endosome. It is found in the phagocytic cup. It localises to the phagosome membrane. The protein localises to the podosome. The protein resides in the cell junction. Its subcellular location is the postsynaptic density. It is found in the synapse. It localises to the synaptosome. The protein localises to the midbody. The protein resides in the membrane. Its subcellular location is the clathrin-coated pit. The catalysed reaction is GTP + H2O = GDP + phosphate + H(+). Catalyzes the hydrolysis of GTP and utilizes this energy to mediate vesicle scission at plasma membrane during endocytosis and filament remodeling at many actin structures during organization of the actin cytoskeleton. Plays an important role in vesicular trafficking processes, namely clathrin-mediated endocytosis (CME), exocytic and clathrin-coated vesicle from the trans-Golgi network, and PDGF stimulated macropinocytosis. During vesicular trafficking process, associates to the membrane, through lipid binding, and self-assembles into ring-like structure through oligomerization to form a helical polymer around the vesicle membrane and leading to vesicle scission. Plays a role in organization of the actin cytoskeleton by mediating arrangement of stress fibers and actin bundles in podocytes. During organization of the actin cytoskeleton, self-assembles into ring-like structure that directly bundles actin filaments to form typical membrane tubules decorated with dynamin spiral polymers. Self-assembly increases GTPase activity and the GTP hydrolysis causes the rapid depolymerization of dynamin spiral polymers, and results in dispersion of actin bundles. Remodels, through its interaction with CTTN, bundled actin filaments in a GTPase-dependent manner and plays a role in orchestrating the global actomyosin cytoskeleton. The interaction with CTTN stabilizes the interaction of DNM2 and actin filaments and stimulates the intrinsic GTPase activity that results in actin filament-barbed ends and increases the sensitivity of filaments in bundles to the actin depolymerizing factor, CFL1. Plays a role in the autophagy process, by participating in the formation of ATG9A vesicles destined for the autophagosomes through its interaction with SNX18, by mediating recycling endosome scission leading to autophagosome release through MAP1LC3B interaction. Also regulates maturation of apoptotic cell corpse-containing phagosomes by recruiting PIK3C3 to the phagosome membrane. Also plays a role in cytokinesis. May participate in centrosome cohesion through its interaction with TUBG1. Plays a role in the regulation of neuron morphology, axon growth and formation of neuronal growth cones. Involved in membrane tubulation. The sequence is that of Dynamin-2 from Mus musculus (Mouse).